The chain runs to 145 residues: D-aminoacyl-tRNA deacylase (145 aa).

The Gly-cisPro motif, important for rejection of L-amino acids signature appears at 137 to 138 (GP).

The protein belongs to the DTD family. Homodimer.

It localises to the cytoplasm. It catalyses the reaction glycyl-tRNA(Ala) + H2O = tRNA(Ala) + glycine + H(+). The catalysed reaction is a D-aminoacyl-tRNA + H2O = a tRNA + a D-alpha-amino acid + H(+). In terms of biological role, an aminoacyl-tRNA editing enzyme that deacylates mischarged D-aminoacyl-tRNAs. Also deacylates mischarged glycyl-tRNA(Ala), protecting cells against glycine mischarging by AlaRS. Acts via tRNA-based rather than protein-based catalysis; rejects L-amino acids rather than detecting D-amino acids in the active site. By recycling D-aminoacyl-tRNA to D-amino acids and free tRNA molecules, this enzyme counteracts the toxicity associated with the formation of D-aminoacyl-tRNA entities in vivo and helps enforce protein L-homochirality. The polypeptide is D-aminoacyl-tRNA deacylase (Pseudomonas aeruginosa (strain UCBPP-PA14)).